The sequence spans 197 residues: MIGHRISRLGSTIVKQLAREGYLATYGTKNLHRSYGHYLQSLPVVPRQARTSQEAWFLKSHKFCTSSTTSSENGDEETEKITIIFVDKDGEEIPVKVPIGMSVLEAAHENDIDLEGACEASLACSTCHVIVMDTEYYNKLEEPTDEENDMLDLAFGLTETSRLGCQVIARPELDGVRLAIPSATRNFAVDGFVPKPH.

Residues 1 to 35 (MIGHRISRLGSTIVKQLAREGYLATYGTKNLHRSY) constitute a mitochondrion transit peptide. Residues 79 to 184 (EKITIIFVDK…GVRLAIPSAT (106 aa)) form the 2Fe-2S ferredoxin-type domain. Residues cysteine 118, cysteine 124, cysteine 127, and cysteine 165 each contribute to the [2Fe-2S] cluster site.

Belongs to the adrenodoxin/putidaredoxin family. It depends on [2Fe-2S] cluster as a cofactor.

It localises to the mitochondrion matrix. Functionally, associates in vitro with the adrenodoxin reductase MFDR to form an efficient low potential electron transfer chain that is able to reduce cytochrome C. Functions as accessory mitochondrial protein involved with BIO2 in the plant biotin synthase reaction. In Arabidopsis thaliana (Mouse-ear cress), this protein is Adrenodoxin-like protein 1, mitochondrial.